A 129-amino-acid chain; its full sequence is NADH-quinone oxidoreductase subunit A (129 aa).

A run of 3 helical transmembrane segments spans residues 6–26 (FWPF…IVGF), 63–83 (LVAV…AWAV), and 89–109 (GWIG…ALIY).

This sequence belongs to the complex I subunit 3 family. NDH-1 is composed of 14 different subunits. Subunits NuoA, H, J, K, L, M, N constitute the membrane sector of the complex.

The protein resides in the cell inner membrane. The catalysed reaction is a quinone + NADH + 5 H(+)(in) = a quinol + NAD(+) + 4 H(+)(out). NDH-1 shuttles electrons from NADH, via FMN and iron-sulfur (Fe-S) centers, to quinones in the respiratory chain. The immediate electron acceptor for the enzyme in this species is believed to be ubiquinone. Couples the redox reaction to proton translocation (for every two electrons transferred, four hydrogen ions are translocated across the cytoplasmic membrane), and thus conserves the redox energy in a proton gradient. The sequence is that of NADH-quinone oxidoreductase subunit A from Nitrosococcus oceani (strain ATCC 19707 / BCRC 17464 / JCM 30415 / NCIMB 11848 / C-107).